Reading from the N-terminus, the 66-residue chain is DNA-directed RNA polymerase subunit Rpo10 (66 aa).

Zn(2+)-binding residues include Cys7, Cys10, Cys44, and Cys45.

This sequence belongs to the archaeal Rpo10/eukaryotic RPB10 RNA polymerase subunit family. In terms of assembly, part of the 13-subunit RNA polymerase complex. Zn(2+) is required as a cofactor.

The protein localises to the cytoplasm. The enzyme catalyses RNA(n) + a ribonucleoside 5'-triphosphate = RNA(n+1) + diphosphate. Functionally, DNA-dependent RNA polymerase (RNAP) catalyzes the transcription of DNA into RNA using the four ribonucleoside triphosphates as substrates. The chain is DNA-directed RNA polymerase subunit Rpo10 from Sulfolobus acidocaldarius (strain ATCC 33909 / DSM 639 / JCM 8929 / NBRC 15157 / NCIMB 11770).